The chain runs to 278 residues: Non-homologous end joining protein Ku (278 aa).

In terms of domain architecture, Ku spans 9-172 (ISFGLVNIPV…MHFAQELVDV (164 aa)). The segment at 255-278 (NQTGAGAKKKPAKTAKRGKSRKAA) is disordered. Positions 261-278 (AKKKPAKTAKRGKSRKAA) are enriched in basic residues.

The protein belongs to the prokaryotic Ku family. As to quaternary structure, homodimer. Interacts with LigD.

Its function is as follows. With LigD forms a non-homologous end joining (NHEJ) DNA repair enzyme, which repairs dsDNA breaks with reduced fidelity. Binds linear dsDNA with 5'- and 3'- overhangs but not closed circular dsDNA nor ssDNA. Recruits and stimulates the ligase activity of LigD. This is Non-homologous end joining protein Ku from Opitutus terrae (strain DSM 11246 / JCM 15787 / PB90-1).